Here is a 131-residue protein sequence, read N- to C-terminus: Large ribosomal subunit protein bL17 (131 aa).

Belongs to the bacterial ribosomal protein bL17 family. Part of the 50S ribosomal subunit. Contacts protein L32.

The polypeptide is Large ribosomal subunit protein bL17 (Methylacidiphilum infernorum (isolate V4) (Methylokorus infernorum (strain V4))).